The primary structure comprises 213 residues: Maleamate amidohydrolase (213 aa).

The Nucleophile role is filled by cysteine 154.

It belongs to the isochorismatase family.

It catalyses the reaction maleamate + H2O = maleate + NH4(+). The protein operates within cofactor degradation; nicotinate degradation. Functionally, maleamate amidase that transforms maleamate into maleate and ammonia in the aerobic nicotinate degradation pathway. The chain is Maleamate amidohydrolase (nicF) from Pseudomonas putida (strain ATCC 47054 / DSM 6125 / CFBP 8728 / NCIMB 11950 / KT2440).